The sequence spans 2144 residues: Reducing polyketide synthase PKS2 (2144 aa).

Residues 10 to 436 (PMPLAIIGMS…GSNSHCIVRA (427 aa)) form the Ketosynthase family 3 (KS3) domain. Residues cysteine 183, histidine 319, and histidine 360 each act as for beta-ketoacyl synthase activity in the active site. The malonyl-CoA:ACP transacylase (MAT) stretch occupies residues 538–855 (VFAFTGQGAQ…VPSLHRGQNA (318 aa)). The N-terminal hotdog fold stretch occupies residues 924–1058 (HDLLGSINSS…ALVKCEATTD (135 aa)). The segment at 924-1214 (HDLLGSINSS…RSYSIDGTTD (291 aa)) is dehydratase (DH) domain. The region spanning 924–1237 (HDLLGSINSS…LAVEATLAPQ (314 aa)) is the PKS/mFAS DH domain. Positions 1076 to 1237 (HSCVGSPLLY…LAVEATLAPQ (162 aa)) are C-terminal hotdog fold. The tract at residues 1461 to 1747 (GMPDSLYLQR…SETDSKKLLL (287 aa)) is enoyl reductase (ER) domain. The segment at 1771–1948 (AVYLLVGGSG…PATSLALTAV (178 aa)) is ketoreductase (KR) domain. Positions 2059–2136 (EATQLLLAAI…KIVDSVIVKR (78 aa)) constitute a Carrier domain. Serine 2096 is modified (O-(pantetheine 4'-phosphoryl)serine).

Its pathway is mycotoxin biosynthesis. Reducing polyketide synthase (PKS); part of the Tox1A locus, one of the 2 loci that mediate the biosynthesis of T-toxin, a family of linear polyketides 37 to 45 carbons in length, of which the major component is 41 carbons, and which leads to high virulence to maize. One of the PKSs (PKS1 or PKS2) could synthesize a precursor, used subsequently by the other PKS as starter unit, to add additional carbons. Variability in the length of the final carbon backbone C35-47 could be achieved by varying the number of condensation cycles, or use of different starter or extender units or might be due to decarboxylation of the penultimate product, catalyzed by DEC1. Additional proteins are required for the biosynthesis of T-toxin, including oxidoreductases RED1, RED2, RED3, LAM1 and OXI1, as well as esterase TOX9. The chain is Reducing polyketide synthase PKS2 from Cochliobolus heterostrophus (strain C4 / ATCC 48331 / race T) (Southern corn leaf blight fungus).